The chain runs to 949 residues: MKMLQNKGPLQELTLNAMAPNGIFQDEPMIQKFENHYVFKKDMKSKRNKEVKNQMNDWLAYGYLCSVHEAKKWLEEETNNEYQNLDDFVDALVNGKVLCQLAFKYYPKLASNWKPRYQISERNTVYLNAFFHFLDFIGMFTPFRFETKDLVRRFNIPKVIYCLHALSYLLDFLEVTRHVPSLYGKLRIKKSQLNTATKEISLLKKAKKFPNFPKLKNFFCSYSHRHETATSNKQVSCFREVPAWIKQCQSQCRGFLTRKCVSIEKLRRDDMSERLGWLPKLETKLSSISDEERLILLKESHQIYRKMVSLHLELLHLPQLEMSLDFCGFSSDDSSIAISSQLVPPILNNLIFKLEESPQIWILIISRFSSDGIDKIDVQNFILLILKFFGFAISASDRRSFLNLIMSCVMVSIQQSSAEVGHSTSDSLISWASRLFTKGFCLQLQSFFEKHLGNVVDKFFLEHLCETTIESDAMRVVTEMLVSCYENRERIPNELPMVLKQIYYSRSESFKPSAIKEFIEYFLCDQLMNCLSVYYSKYFEGKDSKKFTLVKHFMNSLFGRVKLNEQTEIIWHTRNYRIVEALVRKLIHLSTPKIIPVYGGRTLSCTHKDIFDLQNILRYCDERGDFSSFPSFKKLISLLGSPKLFKKHENQILLLESKNEVIHSSLPCSKSSLYQLSLSLCIPLIEGHLRNSLEEILFGVPTELENQKFMSVLRNDKLIKSIHPGSLSGISNSFVNSKHPIEQWQSRLRKILHLFSGRNEDIASLQCVLQFGSSERIHLEDIQNSHRYLCSLKKNNSQKDIHRNPLLSHVFDTNTKSFDTLKTLNYKHAILKKSMGELYKMEMIHECPRQLFGQILVVYLNRERTLLNFYLIENSKTIDEATLQLTDLIQAIKTGIYYLRMFNLPFHVKQLYTWLAPISKYDSEISFNQKKERRKTFLSFERRGKNRKF.

The Calponin-homology (CH) domain occupies 64-170 (LCSVHEAKKW…YCLHALSYLL (107 aa)).

Its subcellular location is the nucleus. This is an uncharacterized protein from Schizosaccharomyces pombe (strain 972 / ATCC 24843) (Fission yeast).